Reading from the N-terminus, the 718-residue chain is MQNFTFFASCAKGIELLLKDELDALGISSSEKLAGVEFEGSFEDAYKVCIYSHLASQVMLKIATQKVTDQQALYDFISSINWLDYFDVNTAFKIIISGKHYDFNNTMFVSQKTKDAIVDQFRRETNERPNIDTDNPDNIIKLHLHKQYVNVFLCLNIESLHKRSYRQFQGQAPLKESLAAAILIKAGWLDELKKEQPILIDPMCGSGTILIEAALMAKNIAPVLLNKEFKLFNSKLHDEDLWNNLLEIAKKAQKPTNAIIQGYDIDNNVLDKADRNIYQAGVEDVVNIKRQDIRDLENELESEGLIVTNPPYGERLYGDQLDELLDIFNGFGDRLSQDFYGWKVAILTSFDESIKEMQLRTTKKNKFYNGAIETVLYQFDINEHARFKHESQLEKNIRLAEASALKSDEHIDFSNKLKKNLKNLKPWLKQSGVECYRLYDADIPTFAVAVDIYGEHVFLQEYRADATIDQNIAKQRFYQAIYQIHKTLDIQYENIHTRVRQRQKGKEQYQKNNDRNNFHVINEFNAKFYVNFDDYLDTGIFLDHRKIRQLVAKASKNKTLLNLFSYTCTASVHAALKGAKTTSVDMSNTYLEWGKNNFELNNLDIKKHNFIQADCISWLKSNSEKFDVIFLDPPTFSNSKRMDDILDIQRDHELLINLAMDSLKKDGVLYFSNNYRRFKMSQEIIAKFNCENIDKVCLSRDFLSNKNIHNCWEIKYKK.

The 112-residue stretch at 44–155 (DAYKVCIYSH…KQYVNVFLCL (112 aa)) folds into the THUMP domain.

It belongs to the methyltransferase superfamily. RlmKL family.

It is found in the cytoplasm. The enzyme catalyses guanosine(2445) in 23S rRNA + S-adenosyl-L-methionine = N(2)-methylguanosine(2445) in 23S rRNA + S-adenosyl-L-homocysteine + H(+). It catalyses the reaction guanosine(2069) in 23S rRNA + S-adenosyl-L-methionine = N(2)-methylguanosine(2069) in 23S rRNA + S-adenosyl-L-homocysteine + H(+). In terms of biological role, specifically methylates the guanine in position 2445 (m2G2445) and the guanine in position 2069 (m7G2069) of 23S rRNA. The protein is Ribosomal RNA large subunit methyltransferase K/L of Francisella philomiragia subsp. philomiragia (strain ATCC 25017 / CCUG 19701 / FSC 153 / O#319-036).